We begin with the raw amino-acid sequence, 901 residues long: MSILTRIFGSRNERVLRKLKKQVVKINKMEPAFEALSDDELKAKTQEFRDRLSGGETLQQILPEAFATVREASKRVLGMRHFDVQLIGGMVLTNRCIAEMRTGEGKTLTATLPCYLIALEGKGVHVVTVNDYLARRDAETNRPLFEFLGMSVGVNIPGLSPEEKREAYAADITYATNSELGFDYLRDNLAHSKEERFQRTLGYALVDEVDSILIDEARTPLIISGQAEKSSELYIAVNKLIPSLIKQEKEDTEEYQGEGDFTLDLKSKQAHLTERGQEKVEDWLIAQGLMPEGDSLYSPSRIVLLHHVMAALRAHTLFEKDVDYIVKDGEIVIVDEHTGRTMAGRRWSDGLHQAIEAKEGVDVKSENQTVASISYQNYFRLYERLAGMTGTADTEAFEFQQIYGLETVVIPTNRPMIRDDRTDVMFENEQYKFNAIIEDIKDCVERQQPVLVGTISVEKSEELSKALDKAGIKHNVLNAKFHQQEAEIVAEAGFPSAVTIATNMAGRGTDIILGGNWKAQAAKLENPTQEQIEALKAEWEKNHEIVMKAGGLHIIGTERHESRRIDNQLRGRSGRQGDPGSSRFYLSLEDGLMRIYLNEGKRNLMRKAFTVAGEAMESKMLAKVIASAQAKVEAFHFDGRKNLLEYDDVANDQRHAIYEQRNYLLDNDDISETINAIRHDVFNGVIDQYIPPQSLEEQWDIKGLEERLSQEFGMELPISNWLEEDNNLHEESLRERIVEIAEKEYKEKEALVGEDAMHHFEKGVMLQTLDELWKEHLASMDYLRQGIHLRGYAQKDPKQEYKKESFRMFTEMLDSLKHHVIMTLTRVRVRTQEEMEEAERARQEMATRINQNNLPVDENSQTTQNSETEDYSDRRIGRNEPCPCGSGKKYKHCHGSRVARQ.

ATP-binding positions include glutamine 85, 103-107 (GEGKT), and aspartate 510. A compositionally biased stretch (basic and acidic residues) spans 836-845 (EEAERARQEM). Residues 836–901 (EEAERARQEM…HCHGSRVARQ (66 aa)) are disordered. The span at 849–866 (INQNNLPVDENSQTTQNS) shows a compositional bias: polar residues. The Zn(2+) site is built by cysteine 882, cysteine 884, cysteine 893, and histidine 894. Residues 888 to 901 (KKYKHCHGSRVARQ) are compositionally biased toward basic residues.

It belongs to the SecA family. Monomer and homodimer. Part of the essential Sec protein translocation apparatus which comprises SecA, SecYEG and auxiliary proteins SecDF-YajC and YidC. It depends on Zn(2+) as a cofactor.

It is found in the cell inner membrane. It localises to the cytoplasm. It carries out the reaction ATP + H2O + cellular proteinSide 1 = ADP + phosphate + cellular proteinSide 2.. Part of the Sec protein translocase complex. Interacts with the SecYEG preprotein conducting channel. Has a central role in coupling the hydrolysis of ATP to the transfer of proteins into and across the cell membrane, serving both as a receptor for the preprotein-SecB complex and as an ATP-driven molecular motor driving the stepwise translocation of polypeptide chains across the membrane. The protein is Protein translocase subunit SecA of Haemophilus influenzae (strain PittEE).